Here is a 321-residue protein sequence, read N- to C-terminus: uncharacterized protein (321 aa).

Positions 1-18 are cleaved as a signal peptide; the sequence is MKKMKKLLLLLSASFAFS.

This is an uncharacterized protein from Aquifex aeolicus (strain VF5).